Here is a 155-residue protein sequence, read N- to C-terminus: HTH-type transcriptional regulator IscR (155 aa).

An HTH rrf2-type domain is found at 2–136 (KLSTKGRYAM…HQTRLSDIIK (135 aa)). Residues 30-53 (LAEVSKRQDISLPYLEQLFVKLRR) constitute a DNA-binding region (H-T-H motif). The heme regulatory motif (HRM) stretch occupies residues 141-145 (PCPAV). Cys-142 is a binding site for [2Fe-2S] cluster.

[2Fe-2S] cluster is required as a cofactor.

Its function is as follows. Regulates the transcription of several operons and genes involved in the biogenesis of Fe-S clusters and Fe-S-containing proteins. Functions as a transcriptional repressor of genes involved in iron metabolism by directly binding to the promoter region of genes preceded by the Iron-Rhodo-box motif. Binds to iscR and hemP promoter regions independently of an Fe-S cluster, but their transcriptional repression is Fe-S cluster-dependent. Seems to activate some target genes in a Fe-S cluster-independent manner. Negatively regulates its own transcription in the presence of iron only. The chain is HTH-type transcriptional regulator IscR from Cereibacter sphaeroides (strain ATCC 17023 / DSM 158 / JCM 6121 / CCUG 31486 / LMG 2827 / NBRC 12203 / NCIMB 8253 / ATH 2.4.1.) (Rhodobacter sphaeroides).